A 451-amino-acid chain; its full sequence is Tubulin alpha chain (451 aa).

Glutamine 11 contacts GTP. The residue at position 40 (lysine 40) is an N6-acetyllysine. Glutamate 71, serine 140, glycine 144, threonine 145, threonine 179, asparagine 206, and asparagine 228 together coordinate GTP. Residue glutamate 71 coordinates Mg(2+). Glutamate 254 is a catalytic residue.

It belongs to the tubulin family. Dimer of alpha and beta chains. A typical microtubule is a hollow water-filled tube with an outer diameter of 25 nm and an inner diameter of 15 nM. Alpha-beta heterodimers associate head-to-tail to form protofilaments running lengthwise along the microtubule wall with the beta-tubulin subunit facing the microtubule plus end conferring a structural polarity. Microtubules usually have 13 protofilaments but different protofilament numbers can be found in some organisms and specialized cells. It depends on Mg(2+) as a cofactor. In terms of processing, undergoes a tyrosination/detyrosination cycle, the cyclic removal and re-addition of a C-terminal tyrosine residue by the enzymes tubulin tyrosine carboxypeptidase (TTCP) and tubulin tyrosine ligase (TTL), respectively. Acetylation of alpha chains at Lys-40 stabilizes microtubules and affects affinity and processivity of microtubule motors. This modification has a role in multiple cellular functions, ranging from cell motility, cell cycle progression or cell differentiation to intracellular trafficking and signaling. In terms of tissue distribution, actively expressed in the lens but does not seem to be lens-specific.

It is found in the cytoplasm. It localises to the cytoskeleton. The catalysed reaction is GTP + H2O = GDP + phosphate + H(+). Its function is as follows. Tubulin is the major constituent of microtubules, a cylinder consisting of laterally associated linear protofilaments composed of alpha- and beta-tubulin heterodimers. Microtubules grow by the addition of GTP-tubulin dimers to the microtubule end, where a stabilizing cap forms. Below the cap, tubulin dimers are in GDP-bound state, owing to GTPase activity of alpha-tubulin. The sequence is that of Tubulin alpha chain from Enteroctopus dofleini (North Pacific giant octopus).